Here is a 632-residue protein sequence, read N- to C-terminus: Serine/threonine-protein kinase plk-2 (632 aa).

A disordered region spans residues 1–26; it reads MQRVQPSAARVKSQKKEKAPPDVPDV. A Protein kinase domain is found at 36 to 287; sequence YEKGKFLGKG…ARAVCRDHFF (252 aa). Residues 42–50 and K65 each bind ATP; that span reads LGKGGFAHC. Residue D159 is the Proton acceptor of the active site. Residues 313-334 are disordered; it reads AEENVSPSGTIDQRGPHQAGRS. POLO box domains lie at 405 to 484 and 506 to 588; these read WISK…YMND and TLRV…RLVE.

Belongs to the protein kinase superfamily. Ser/Thr protein kinase family. CDC5/Polo subfamily. As to quaternary structure, interacts (via POLO box domain) with mex-5 and mex-6. Interacts (via POLO box domain) with him-8 (via N-terminus); the interaction mediates plk-2 recruitment to the pairing region of X chromosomes during meiosis. Interacts with sun-1. May interact with nicotinic acetylcholine receptor. It depends on Mg(2+) as a cofactor. As to expression, expressed in oocytes.

Its subcellular location is the nucleus. It is found in the cytoplasm. The protein resides in the cytoskeleton. It localises to the microtubule organizing center. The protein localises to the centrosome. Its subcellular location is the chromosome. It is found in the centromere. The protein resides in the kinetochore. The catalysed reaction is L-seryl-[protein] + ATP = O-phospho-L-seryl-[protein] + ADP + H(+). It catalyses the reaction L-threonyl-[protein] + ATP = O-phospho-L-threonyl-[protein] + ADP + H(+). In terms of biological role, serine/threonine-protein kinase which plays a role, during oogenesis, in chromosome pairing and synapsis, by facilitating the recruitment and attachment of meiotic chromosomes to the nuclear envelope during prophase. Promotes the localization of brc-1 to the short arm of homologous chromosomes during meiotic prophase I. Regulates the formation of sun-1 patches along the nuclear envelope. Promotes meiotic nuclei apoptosis in response to chromosomal asynapsis. Plays a redundant role with plk-1 in the establishment of cell polarity downstream of mex-5 and mex-6 during the first embryonic cell divisions. Plays a role in nicotinic acetylcholine receptor-mediated sensitivity to nicotine but not levamisole. Regulates motility. The sequence is that of Serine/threonine-protein kinase plk-2 from Caenorhabditis elegans.